A 195-amino-acid polypeptide reads, in one-letter code: Probable GTP-binding protein EngB (195 aa).

The EngB-type G domain occupies 24 to 195; it reads ELPEIALAGR…EAWDAILEKL (172 aa). Residues 32–39, 59–63, 77–80, 144–147, and 176–178 contribute to the GTP site; these read GRSNVGKS, GKTQL, DVPG, TKAD, and FSS. Mg(2+) contacts are provided by serine 39 and threonine 61.

It belongs to the TRAFAC class TrmE-Era-EngA-EngB-Septin-like GTPase superfamily. EngB GTPase family. Requires Mg(2+) as cofactor.

In terms of biological role, necessary for normal cell division and for the maintenance of normal septation. This Streptococcus pneumoniae (strain ATCC 700669 / Spain 23F-1) protein is Probable GTP-binding protein EngB.